The chain runs to 284 residues: 4-diphosphocytidyl-2-C-methyl-D-erythritol kinase (284 aa).

Lys-14 is a catalytic residue. ATP is bound at residue 98-108 (PMGGGLGGGSS). Asp-140 is a catalytic residue.

It belongs to the GHMP kinase family. IspE subfamily.

It carries out the reaction 4-CDP-2-C-methyl-D-erythritol + ATP = 4-CDP-2-C-methyl-D-erythritol 2-phosphate + ADP + H(+). The protein operates within isoprenoid biosynthesis; isopentenyl diphosphate biosynthesis via DXP pathway; isopentenyl diphosphate from 1-deoxy-D-xylulose 5-phosphate: step 3/6. Catalyzes the phosphorylation of the position 2 hydroxy group of 4-diphosphocytidyl-2C-methyl-D-erythritol. The sequence is that of 4-diphosphocytidyl-2-C-methyl-D-erythritol kinase from Shewanella piezotolerans (strain WP3 / JCM 13877).